Here is a 1364-residue protein sequence, read N- to C-terminus: MPTSPRRNSIATTDNVIGRNKSRKRPHSLGGPGALQELKEHTNPAKGILKSYSSFSVDPAFTGDEDFNDIHTQINNTVIGISSNVMAASKRLQMEDLQQLSRETSRKSLNRRVSFASHARVRWYPKDHQSDSEKSTSNHSTPERTFASDAKNHSPKGPTTTSFSRNETQSSPHSHSASIISDGSDMDIASPIRSTESDMVSEALNAGHPPPSLYPENDDLSIQNPTKALPEAEKALDVHDATREQVNDREETNMDLTIQFQEADSFLSHSESIKGLSSSEQGTVYSLKASHDPSNQTQLSSPNKSSSPTSIEISDFSKNNENHDQSENKEEEEDMMLTRPIEIPQHFSPIARPLTSQEAIVDMDITSNNINLSPVSHFSNGLDLQNLEEAPMNLTRPINANPHLTNHSPNDLTNGEEEMDTTSAFNIENSHLTLLSPIRPSSRSMEEQIMDLTQPISSTNAPTHLNEDDLNQFTSNISSSSKPRKDNNKTANSSKPIPDSEDFMDITRPFNILSPSKEALSEEQPMELTSTVFPCENSTSHLEVEEAAMDETVAFQIRGNNVELPSADKENAEREEIPSYSDKSENFNTTSFTNHERSPNGNNNLKFSKDPNSSSPSRHVVATPTDKLGTRKRRLRYSTSSFDQSTLRRNRLATIRNARKSISTLNDRELLPVNFFEKKVNSGLYKSVERSENYRLGATPLTAEKPFTTEKPLSSLPEEVSRQPTDDKGEQVSNADVDSGLSKTERLTIQQTNEIKHVPTNTTSSVKLPQQPSNEDEKERITTADYADSTSLERLESQEPNRNELVQVGSSNAGNTTSVGMNEHEKSPVKLSKGVSNVDTSLGASTINTNILNQDSGPNEEIPVGNEPEFDTMPTLPNVEPISLSDFLKMTGIEFLDNLTIAKRRETLLPNAEENKKCSIQELLESFYIQFPLLELYKFSCQQLQDYIAEGKDFVTKIEEETLKENPLLFYEYRKASSDMRVLMDSQFLMMKTFARLQAKGDWYEWREGLMQGIKHELNLNLTGMQRSLTHLMDVANVIHPYAQEIQERYNGSITTVQTLKKQKEFANQYDSTLLAQAQEKLEKLKVEVERRRRLLSEKEERRKELAIKIEQVTNSCSDLELRTNAEQDFYAKNQDFEFDEIKRYEEQLLNLKNELGWTIVSLTAGGIKLATNNTALSPYSAEVTVEILRQNFQVNVDIACKFPNESNACSSNVLEHVASSFSKWHSKVFSRNLRLLKKYLNDVSICWEQIVYLVQDFQRLWYHWPFLSVENDDKSIIINVELYLRSVSSKVKVVFGLPIDTIYQTTEVGKFYASTSVAVKQMYAESEGDSYVSEVLNTLSEVVHCTSTYALSSACLTVWNKYS.

The segment covering 1–15 (MPTSPRRNSIATTDN) has biased composition (polar residues). 3 disordered regions span residues 1–36 (MPTSPRRNSIATTDNVIGRNKSRKRPHSLGGPGALQ), 124–190 (YPKD…DIAS), and 202–223 (EALNAGHPPPSLYPENDDLSIQ). The span at 124–136 (YPKDHQSDSEKST) shows a compositional bias: basic and acidic residues. A compositionally biased stretch (polar residues) spans 157-169 (GPTTTSFSRNETQ). The segment covering 170 to 181 (SSPHSHSASIIS) has biased composition (low complexity). Residues 254–257 (MDLT) carry the MELT; degenerate motif. Thr-257 bears the Phosphothreonine; by mph1 mark. The segment at 289-334 (ASHDPSNQTQLSSPNKSSSPTSIEISDFSKNNENHDQSENKEEEED) is disordered. Low complexity predominate over residues 300–310 (SSPNKSSSPTS). A compositionally biased stretch (basic and acidic residues) spans 318–328 (KNNENHDQSEN). An MELT; degenerate motif is present at residues 450–453 (MDLT). Thr-453 carries the post-translational modification Phosphothreonine; by mph1. Residues 456–503 (ISSTNAPTHLNEDDLNQFTSNISSSSKPRKDNNKTANSSKPIPDSEDF) form a disordered region. Residues 471 to 481 (NQFTSNISSSS) are compositionally biased toward polar residues. Positions 504 to 507 (MDIT) match the MELT; degenerate motif. A Phosphothreonine; by mph1 modification is found at Thr-507. 2 disordered regions span residues 564–643 (LPSA…SSFD) and 697–837 (GATP…GVSN). Residues 566–585 (SADKENAEREEIPSYSDKSE) are compositionally biased toward basic and acidic residues. Over residues 586 to 617 (NFNTTSFTNHERSPNGNNNLKFSKDPNSSSPS) the composition is skewed to polar residues. Basic and acidic residues predominate over residues 719 to 730 (EVSRQPTDDKGE). Residues 747-773 (LTIQQTNEIKHVPTNTTSSVKLPQQPS) are compositionally biased toward polar residues. The span at 791–802 (SLERLESQEPNR) shows a compositional bias: basic and acidic residues. The segment covering 808-820 (VGSSNAGNTTSVG) has biased composition (polar residues). Residues 1075–1155 (LAQAQEKLEK…EEQLLNLKNE (81 aa)) are a coiled coil. The Nuclear localization signal motif lies at 1091-1105 (RRRRLLSEKEERRKE).

Component of the KNL1/SPC105 complex composed of at least spc7 and sos7. Part of the outer kinetochore KMN network that includes the KNL1, MIS12 and NDC80 complexes. Interacts (via C-terminus) with sos7 (via C-terminus); the interaction is direct. Interacts (when phosphorylated on MELT motifs) with bub1 and bub3; to recruit the BUB1-BUB3 complex to the kinetochore. Phosphorylation of threonine residues in the MELT motifs by mph1/mps1 leads to recruitment of bub1 and bub3 to the kinetochore, and is required to maintain spindle assembly checkpoint signaling.

It localises to the nucleus. The protein localises to the chromosome. The protein resides in the centromere. It is found in the kinetochore. In terms of biological role, acts as a component of the outer kinetochore KNL1 complex that serves as a docking point for spindle assembly checkpoint components and mediates microtubule-kinetochore interactions. Kinetochores, consisting of a centromere-associated inner segment and a microtubule-contacting outer segment, play a crucial role in chromosome segregation by mediating the physical connection between centromeric DNA and spindle microtubules. The outer kinetochore is made up of the ten-subunit KMN network, comprising the MIS12, NDC80 and KNL1 complexes, and auxiliary microtubule-associated components; together they connect the outer kinetochore with the inner kinetochore, bind microtubules, and mediate interactions with mitotic checkpoint proteins that delay anaphase until chromosomes are bioriented on the spindle. Recruits the BUB1-BUB3 complex to kinetochores when phosphorylated by mph1/mps1, to support spindle assembly checkpoint signaling. Functions both in mitotic and in meiotic chromosome segregation. This chain is Outer kinetochore KNL1 complex subunit spc7, found in Schizosaccharomyces pombe (strain 972 / ATCC 24843) (Fission yeast).